A 241-amino-acid chain; its full sequence is tRNA pseudouridine synthase A (241 aa).

Residue D51 is the Nucleophile of the active site. Y110 lines the substrate pocket.

Belongs to the tRNA pseudouridine synthase TruA family. In terms of assembly, homodimer.

It carries out the reaction uridine(38/39/40) in tRNA = pseudouridine(38/39/40) in tRNA. Its function is as follows. Formation of pseudouridine at positions 38, 39 and 40 in the anticodon stem and loop of transfer RNAs. The sequence is that of tRNA pseudouridine synthase A from Campylobacter jejuni subsp. doylei (strain ATCC BAA-1458 / RM4099 / 269.97).